A 462-amino-acid chain; its full sequence is N-myc proto-oncogene protein (462 aa).

An interaction with AURKA region spans residues 19–47 (LEFDSLQPCFYPDEDDFYFGGPDSTPPGE). Residues 61–90 (LSPSRAFPEHSPEPSNWATEMLLPEADLWG) form an interaction with AURKA and FBXW7 region. A 9aaTAD motif is present at residues 76–85 (NWATEMLLPE). 3 disordered regions span residues 134–177 (KLQH…ATLP), 232–289 (AAPA…SSNN), and 332–390 (APSP…LERQ). Low complexity-rich tracts occupy residues 143–176 (GVSSACSAPGVGASSPGGRALGGSSSASHTGATL) and 232–244 (AAPARAGGRPASS). Acidic residues predominate over residues 257-276 (TLSDSDDEDDEEEDEEEEID). 2 positions are modified to phosphoserine; by CK2: S259 and S261. Residues 379 to 431 (ERRRNHNILERQRRNDLRSSFLTLRDHVPELVKNEKAAKVVILKKATEYVHAL) form the bHLH domain. The leucine-zipper stretch occupies residues 431–452 (LQANEHQLLLEKEKLQARQQQL).

In terms of assembly, efficient DNA binding requires dimerization with another bHLH protein. Binds DNA as a heterodimer with MAX. Interacts with KDM5A, KDM5B and HUWE1. Interacts with MYCNOS. Interacts with AURKA; interaction is phospho-independent and triggers AURKA activation; AURKA competes with FBXW7 for binding to unphosphorylated MYCN but not for binding to unphosphorylated MYCN. Interacts with FBXW7; FBXW7 competes with AURKA for binding to unphosphorylated MYCN but not for binding to phosphorylated MYCN. Phosphorylated by GSK3-beta which may promote its degradation. Phosphorylated by AURKA.

It is found in the nucleus. Functionally, positively regulates the transcription of MYCNOS in neuroblastoma cells. The chain is N-myc proto-oncogene protein (Mycn) from Mus musculus (Mouse).